A 119-amino-acid polypeptide reads, in one-letter code: UPF0102 protein SGR_1878 (119 aa).

It belongs to the UPF0102 family.

The polypeptide is UPF0102 protein SGR_1878 (Streptomyces griseus subsp. griseus (strain JCM 4626 / CBS 651.72 / NBRC 13350 / KCC S-0626 / ISP 5235)).